A 157-amino-acid polypeptide reads, in one-letter code: Ribonuclease H (157 aa).

An RNase H type-1 domain is found at 1-146 (MPDLFAYTDG…ADELARAGMA (146 aa)). 4 residues coordinate Mg(2+): Asp9, Glu52, Asp74, and Asp138.

This sequence belongs to the RNase H family. Monomer. It depends on Mg(2+) as a cofactor.

It is found in the cytoplasm. The catalysed reaction is Endonucleolytic cleavage to 5'-phosphomonoester.. Functionally, endonuclease that specifically degrades the RNA of RNA-DNA hybrids. The chain is Ribonuclease H from Ruegeria sp. (strain TM1040) (Silicibacter sp.).